We begin with the raw amino-acid sequence, 230 residues long: Ropporin-1-like protein (230 aa).

The 38-residue stretch at 17–54 (PELPDILKQFTKAAIRTQPADVLQWSAGYFSALSRGDP) folds into the RIIa domain.

The protein belongs to the ropporin family. In terms of assembly, component of the axonemal radial spoke complex 1 (RS1), at least composed of spoke head proteins RSPH1, RSPH3, RSPH9 and the cilia-specific component RSPH4A or sperm-specific component RSPH6A, spoke stalk proteins RSPH14, DNAJB13, DYDC1, ROPN1L and NME5, and the anchor protein IQUB. May interact with AKAP3. Interacts with FSCB; the interaction increases upon spermatozoa capacitation conditions. Interacts with CFAP61. In terms of processing, sumoylated, sumoylation decreases upon spermatozoa capacitation conditions.

It is found in the cell projection. Its subcellular location is the cilium. The protein resides in the flagellum. Its function is as follows. Functions as part of axonemal radial spoke complexes that play an important part in the motility of sperm and cilia. Important for male fertility. With ROPN1, involved in fibrous sheath integrity and sperm motility, plays a role in PKA-dependent signaling processes required for spermatozoa capacitation. The polypeptide is Ropporin-1-like protein (ROPN1L) (Macaca fascicularis (Crab-eating macaque)).